The chain runs to 1196 residues: Chromosome partition protein Smc (1196 aa).

An ATP-binding site is contributed by 32 to 39 (PNGSGKSN). Coiled-coil stretches lie at residues 168 to 288 (LKHR…SVQQ) and 327 to 497 (DALE…LERK). The region spanning 510 to 621 (AGILGPMAKL…VDDLDRALAL (112 aa)) is the SMC hinge domain. 2 coiled-coil regions span residues 654–829 (LEVT…RAQQ) and 972–1026 (DRPT…KDLL).

This sequence belongs to the SMC family. As to quaternary structure, homodimer.

It localises to the cytoplasm. Required for chromosome condensation and partitioning. The polypeptide is Chromosome partition protein Smc (Mycolicibacterium paratuberculosis (strain ATCC BAA-968 / K-10) (Mycobacterium paratuberculosis)).